A 491-amino-acid polypeptide reads, in one-letter code: Chromosomal replication initiator protein DnaA (491 aa).

Positions Met-1–Leu-69 are domain I, interacts with DnaA modulators. A domain II region spans residues Leu-69 to Leu-154. Residues Pro-155 to Ser-371 form a domain III, AAA+ region region. ATP contacts are provided by Gly-199, Gly-201, Lys-202, and Thr-203. A domain IV, binds dsDNA region spans residues Lys-372–Arg-491.

The protein belongs to the DnaA family. In terms of assembly, oligomerizes as a right-handed, spiral filament on DNA at oriC.

It is found in the cytoplasm. Functionally, plays an essential role in the initiation and regulation of chromosomal replication. ATP-DnaA binds to the origin of replication (oriC) to initiate formation of the DNA replication initiation complex once per cell cycle. Binds the DnaA box (a 9 base pair repeat at the origin) and separates the double-stranded (ds)DNA. Forms a right-handed helical filament on oriC DNA; dsDNA binds to the exterior of the filament while single-stranded (ss)DNA is stabiized in the filament's interior. The ATP-DnaA-oriC complex binds and stabilizes one strand of the AT-rich DNA unwinding element (DUE), permitting loading of DNA polymerase. After initiation quickly degrades to an ADP-DnaA complex that is not apt for DNA replication. Binds acidic phospholipids. The protein is Chromosomal replication initiator protein DnaA of Francisella tularensis subsp. novicida (strain U112).